Here is a 984-residue protein sequence, read N- to C-terminus: Pro-apoptotic serine protease NMA111 (984 aa).

Positions 51–241 (VVSIQFAQVA…LPLNRGKRAL (191 aa)) are serine protease. Residues H89, D120, and S203 each act as charge relay system in the active site. PDZ domains lie at 268-346 (RRLG…ERNG) and 756-826 (PEWI…VRNK).

This sequence belongs to the peptidase S1C family.

The protein localises to the nucleus. In terms of biological role, nuclear serine protease which mediates apoptosis. In Yarrowia lipolytica (strain CLIB 122 / E 150) (Yeast), this protein is Pro-apoptotic serine protease NMA111 (NMA111).